A 110-amino-acid chain; its full sequence is Keratin-associated protein 6-3 (110 aa).

Belongs to the KRTAP type 6 family. In terms of assembly, interacts with hair keratins.

Its function is as follows. In the hair cortex, hair keratin intermediate filaments are embedded in an interfilamentous matrix, consisting of hair keratin-associated proteins (KRTAP), which are essential for the formation of a rigid and resistant hair shaft through their extensive disulfide bond cross-linking with abundant cysteine residues of hair keratins. The matrix proteins include the high-sulfur and high-glycine-tyrosine keratins. The protein is Keratin-associated protein 6-3 of Homo sapiens (Human).